A 676-amino-acid polypeptide reads, in one-letter code: Heat shock cognate HSP70 protein (676 aa).

Positions 613-676 (SARREGKDGW…RIEAINANTE (64 aa)) are disordered. Positions 630 to 646 (GSGDDNDGDDNSDEEDE) are enriched in acidic residues.

The protein belongs to the heat shock protein 70 family.

This Trypanosoma brucei brucei protein is Heat shock cognate HSP70 protein.